The following is a 26-amino-acid chain: AMP deaminase 1 (26 aa).

The protein belongs to the metallo-dependent hydrolases superfamily. Adenosine and AMP deaminases family. In terms of assembly, homotetramer.

The enzyme catalyses AMP + H2O + H(+) = IMP + NH4(+). The protein operates within purine metabolism; IMP biosynthesis via salvage pathway; IMP from AMP: step 1/1. In terms of biological role, AMP deaminase plays a critical role in energy metabolism. This chain is AMP deaminase 1 (AMPD1), found in Gallus gallus (Chicken).